The primary structure comprises 155 residues: 6,7-dimethyl-8-ribityllumazine synthase (155 aa).

5-amino-6-(D-ribitylamino)uracil-binding positions include W23, 57–59 (AWE), and 81–83 (CVI). Residue 86-87 (DT) participates in (2S)-2-hydroxy-3-oxobutyl phosphate binding. The active-site Proton donor is H89. Position 114 (N114) interacts with 5-amino-6-(D-ribitylamino)uracil. R128 is a (2S)-2-hydroxy-3-oxobutyl phosphate binding site.

Belongs to the DMRL synthase family. In terms of assembly, forms an icosahedral capsid composed of 60 subunits, arranged as a dodecamer of pentamers.

It catalyses the reaction (2S)-2-hydroxy-3-oxobutyl phosphate + 5-amino-6-(D-ribitylamino)uracil = 6,7-dimethyl-8-(1-D-ribityl)lumazine + phosphate + 2 H2O + H(+). It participates in cofactor biosynthesis; riboflavin biosynthesis; riboflavin from 2-hydroxy-3-oxobutyl phosphate and 5-amino-6-(D-ribitylamino)uracil: step 1/2. In terms of biological role, catalyzes the formation of 6,7-dimethyl-8-ribityllumazine by condensation of 5-amino-6-(D-ribitylamino)uracil with 3,4-dihydroxy-2-butanone 4-phosphate. This is the penultimate step in the biosynthesis of riboflavin. The protein is 6,7-dimethyl-8-ribityllumazine synthase of Stenotrophomonas maltophilia (strain R551-3).